A 365-amino-acid chain; its full sequence is Succinyl-diaminopimelate desuccinylase (365 aa).

Position 64 (H64) interacts with Zn(2+). Residue D66 is part of the active site. Residue D95 participates in Zn(2+) binding. The Proton acceptor role is filled by E125. E126, E154, and H339 together coordinate Zn(2+).

Belongs to the peptidase M20A family. DapE subfamily. Homodimer. It depends on Zn(2+) as a cofactor. Co(2+) is required as a cofactor.

It catalyses the reaction N-succinyl-(2S,6S)-2,6-diaminopimelate + H2O = (2S,6S)-2,6-diaminopimelate + succinate. It functions in the pathway amino-acid biosynthesis; L-lysine biosynthesis via DAP pathway; LL-2,6-diaminopimelate from (S)-tetrahydrodipicolinate (succinylase route): step 3/3. In terms of biological role, catalyzes the hydrolysis of N-succinyl-L,L-diaminopimelic acid (SDAP), forming succinate and LL-2,6-diaminopimelate (DAP), an intermediate involved in the bacterial biosynthesis of lysine and meso-diaminopimelic acid, an essential component of bacterial cell walls. The protein is Succinyl-diaminopimelate desuccinylase of Sulfurimonas denitrificans (strain ATCC 33889 / DSM 1251) (Thiomicrospira denitrificans (strain ATCC 33889 / DSM 1251)).